A 301-amino-acid chain; its full sequence is Probable splicing factor ECU05_1440 (301 aa).

Residues 1 to 70 form the RRM 1 domain; the sequence is MQIFIGKIPN…APISVERANG (70 aa). Disordered stretches follow at residues 106 to 140 and 255 to 301; these read PPMR…SFRM and SKDE…AEND. 2 stretches are compositionally biased toward basic and acidic residues: residues 110 to 140 and 255 to 270; these read YESR…SFRM and SKDE…HMRS. In terms of domain architecture, RRM 2 spans 182–255; the sequence is LKVVFENIAP…HILKTRSYLS (74 aa).

This sequence belongs to the splicing factor SR family.

Its subcellular location is the nucleus. Its function is as follows. Plays a role in splicing. This Encephalitozoon cuniculi (strain GB-M1) (Microsporidian parasite) protein is Probable splicing factor ECU05_1440.